Reading from the N-terminus, the 174-residue chain is ATP synthase subunit d, mitochondrial (174 aa).

Ser-2 carries the post-translational modification N-acetylserine.

This sequence belongs to the ATPase d subunit family.

It localises to the mitochondrion inner membrane. Its function is as follows. Mitochondrial membrane ATP synthase (F(1)F(0) ATP synthase or Complex V) produces ATP from ADP in the presence of a proton gradient across the membrane which is generated by electron transport complexes of the respiratory chain. F-type ATPases consist of two structural domains, F(1) - containing the extramembraneous catalytic core, and F(0) - containing the membrane proton channel, linked together by a central stalk and a peripheral stalk. During catalysis, ATP synthesis in the catalytic domain of F(1) is coupled via a rotary mechanism of the central stalk subunits to proton translocation. Part of the complex F(0) domain and the peripheric stalk, which acts as a stator to hold the catalytic alpha(3)beta(3) subcomplex and subunit a/ATP6 static relative to the rotary elements. The polypeptide is ATP synthase subunit d, mitochondrial (ATP7) (Kluyveromyces lactis (strain ATCC 8585 / CBS 2359 / DSM 70799 / NBRC 1267 / NRRL Y-1140 / WM37) (Yeast)).